Here is a 270-residue protein sequence, read N- to C-terminus: 2-epi-5-epi-valiolone 7-phosphate 2-epimerase (270 aa).

Catalysis depends on proton donor/acceptor residues E143 and E236.

It belongs to the hyi family.

It carries out the reaction 2-epi-5-epi-valiolone 7-phosphate = 5-epi-valiolone 7-phosphate. Its function is as follows. Involved in the biosynthesis of the alpha-glucosidase inhibitor acarbose. Catalyzes the 2-epimerisation of 2-epi-5-epivaliolone 7-phosphate to yield 5-epi-valiolone 7-phosphate. The polypeptide is 2-epi-5-epi-valiolone 7-phosphate 2-epimerase (acbO) (Actinoplanes sp. (strain ATCC 31044 / CBS 674.73 / SE50/110)).